We begin with the raw amino-acid sequence, 324 residues long: E3 ubiquitin-protein ligase SIAH2 (324 aa).

The span at 1–15 shows a compositional bias: polar residues; it reads MSRPSSTGPSANKPC. The segment at 1 to 42 is disordered; that stretch reads MSRPSSTGPSANKPCSKQPPPQPQHTPSPAAPPAAATISAAG. Serine 6 is subject to Phosphoserine. Residue serine 16 is modified to Phosphoserine; by DYRK2. The span at 17–32 shows a compositional bias: pro residues; it reads KQPPPQPQHTPSPAAP. Residue threonine 26 is modified to Phosphothreonine; by DYRK2. At serine 28 the chain carries Phosphoserine; by DYRK2 and MAPK14. Positions 33 to 42 are enriched in low complexity; sequence PAAATISAAG. Position 68 is a phosphoserine; by DYRK2 (serine 68). The segment at 80-115 adopts an RING-type zinc-finger fold; it reads CPVCFDYVLPPILQCQAGHLVCNQCRQKLSCCPTCR. Phosphothreonine; by DYRK2 is present on threonine 119. Residues 130–322 are SBD; sequence VASAVLFPCK…LGINVTISTC (193 aa). The SIAH-type zinc-finger motif lies at 133-193; the sequence is AVLFPCKYAT…VMSHLMHAHK (61 aa). The Zn(2+) site is built by cysteine 138, cysteine 145, histidine 157, cysteine 161, cysteine 168, cysteine 175, histidine 187, and histidine 192.

The protein belongs to the SINA (Seven in absentia) family. In terms of assembly, homodimer. Interacts with UBE2E2. Interacts with PEG3. Interacts with VAV1, without mediating its ubiquitin-mediated degradation. Interacts with CACYBP/SIP. Probable component of some large E3 complex possibly composed of UBE2D1, SIAH2, CACYBP/SIP, SKP1, APC and TBL1X. Interacts with PEG10, which may inhibit its activity. Interacts with EGLN2 and SNCAIP. Interacts with DYRK2. Interacts with NR1D1 and NR1D2. Interacts with DCC. Interacts with AXIN1. In terms of processing, phosphorylated at Ser-28 by MAPK14, which mediates the degradation by the proteasome of EGLN3. Phosphorylated at Ser-28 by DYRK2; this increases the ubiquitin ligase activity and promotes degradation of EGLN3. In terms of tissue distribution, widely expressed at low level.

The protein localises to the cytoplasm. The protein resides in the nucleus. It carries out the reaction S-ubiquitinyl-[E2 ubiquitin-conjugating enzyme]-L-cysteine + [acceptor protein]-L-lysine = [E2 ubiquitin-conjugating enzyme]-L-cysteine + N(6)-ubiquitinyl-[acceptor protein]-L-lysine.. It functions in the pathway protein modification; protein ubiquitination. With respect to regulation, inhibited by interaction with SNCAIP (isoform 2, but not isoform 1). May be inhibited by interaction with PEG10. In terms of biological role, E3 ubiquitin-protein ligase that mediates ubiquitination and subsequent proteasomal degradation of target proteins. E3 ubiquitin ligases accept ubiquitin from an E2 ubiquitin-conjugating enzyme in the form of a thioester and then directly transfers the ubiquitin to targeted substrates. Mediates E3 ubiquitin ligase activity either through direct binding to substrates or by functioning as the essential RING domain subunit of larger E3 complexes. Triggers the ubiquitin-mediated degradation of many substrates, including proteins involved in transcription regulation (GPS2, POU2AF1, PML, NCOR1), a cell surface receptor (DCC), an antiapoptotic protein (BAG1), and a protein involved in synaptic vesicle function in neurons (SYP). Mediates ubiquitination and proteasomal degradation of DYRK2 in response to hypoxia. It is thereby involved in apoptosis, tumor suppression, cell cycle, transcription and signaling processes. Has some overlapping function with SIAH1. Triggers the ubiquitin-mediated degradation of TRAF2, whereas SIAH1 does not. Promotes monoubiquitination of SNCA. Regulates cellular clock function via ubiquitination of the circadian transcriptional repressors NR1D1 and NR1D2 leading to their proteasomal degradation. Plays an important role in mediating the rhythmic degradation/clearance of NR1D1 and NR1D2 contributing to their circadian profile of protein abundance. Mediates ubiquitination and degradation of EGLN2 and EGLN3 in response to the unfolded protein response (UPR), leading to their degradation and subsequent stabilization of ATF4. Also part of the Wnt signaling pathway in which it mediates the Wnt-induced ubiquitin-mediated proteasomal degradation of AXIN1. In Homo sapiens (Human), this protein is E3 ubiquitin-protein ligase SIAH2 (SIAH2).